Consider the following 931-residue polypeptide: Chitin synthase 7 (931 aa).

2 disordered regions span residues 1–34 (MVRH…GHYR) and 56–92 (GDVG…ASSS). Composition is skewed to polar residues over residues 7 to 28 (FTNS…TPYP) and 83 to 92 (PLTTGPASSS). The N-linked (GlcNAc...) asparagine glycan is linked to Asn536. The next 3 membrane-spanning stretches (helical) occupy residues 573–593 (IFSL…FSII), 615–635 (INLV…VLAL), and 647–667 (ILTL…SIIL). N-linked (GlcNAc...) asparagine glycosylation is present at Asn691. 2 consecutive transmembrane segments (helical) span residues 695-715 (GVLV…SFLY) and 725-745 (FPQY…YAFC). The interval 763-789 (LPAISSSKQKDGETAVVEEQQRSQGEL) is disordered. Asn819 carries N-linked (GlcNAc...) asparagine glycosylation. The chain crosses the membrane as a helical span at residues 826 to 846 (LVVVWLLTNAALAISIQTLNG). N-linked (GlcNAc...) asparagine glycans are attached at residues Asn866 and Asn874. A helical membrane pass occupies residues 899–919 (AILWTTFALSMVRFIGCVFYW).

It belongs to the chitin synthase family. Class III subfamily.

The protein localises to the cell membrane. The enzyme catalyses [(1-&gt;4)-N-acetyl-beta-D-glucosaminyl](n) + UDP-N-acetyl-alpha-D-glucosamine = [(1-&gt;4)-N-acetyl-beta-D-glucosaminyl](n+1) + UDP + H(+). Polymerizes chitin, a structural polymer of the cell wall and septum, by transferring the sugar moiety of UDP-GlcNAc to the non-reducing end of the growing chitin polymer. The protein is Chitin synthase 7 of Cryptococcus neoformans var. grubii serotype A (strain H99 / ATCC 208821 / CBS 10515 / FGSC 9487) (Filobasidiella neoformans var. grubii).